Consider the following 214-residue polypeptide: uncharacterized protein (214 aa).

A run of 5 helical transmembrane segments spans residues 33–53 (VILF…ILVV), 104–124 (ILGI…SYVL), 132–152 (FIYL…LSAS), 153–173 (GGVL…FGTK), and 186–206 (LLIL…TITF).

Its subcellular location is the cell membrane. This is an uncharacterized protein from Methanocaldococcus jannaschii (strain ATCC 43067 / DSM 2661 / JAL-1 / JCM 10045 / NBRC 100440) (Methanococcus jannaschii).